Here is a 487-residue protein sequence, read N- to C-terminus: Cytochrome P450 2C4 (487 aa).

Cys432 provides a ligand contact to heme.

This sequence belongs to the cytochrome P450 family. The cofactor is heme.

The protein localises to the endoplasmic reticulum membrane. It localises to the microsome membrane. It catalyses the reaction an organic molecule + reduced [NADPH--hemoprotein reductase] + O2 = an alcohol + oxidized [NADPH--hemoprotein reductase] + H2O + H(+). Functionally, cytochromes P450 are a group of heme-thiolate monooxygenases. In liver microsomes, this enzyme is involved in an NADPH-dependent electron transport pathway. It oxidizes a variety of structurally unrelated compounds, including steroids, fatty acids, and xenobiotics. This chain is Cytochrome P450 2C4 (CYP2C4), found in Oryctolagus cuniculus (Rabbit).